The primary structure comprises 102 residues: RNA-binding protein Hfq (102 aa).

Positions 9–68 (DPFLNALRRERVPVSIYLVNGIKLQGQIESFDQFVILLKNTVSQMVYKHAISTVVPSRPV) constitute a Sm domain. Residues 63 to 102 (VPSRPVSHHSNNAGGGASNNYHHGSNAQGSTAQQDSEETE) are disordered. Over residues 70-88 (HHSNNAGGGASNNYHHGSN) the composition is skewed to low complexity.

It belongs to the Hfq family. As to quaternary structure, homohexamer.

RNA chaperone that binds small regulatory RNA (sRNAs) and mRNAs to facilitate mRNA translational regulation in response to envelope stress, environmental stress and changes in metabolite concentrations. Also binds with high specificity to tRNAs. The protein is RNA-binding protein Hfq of Salmonella agona (strain SL483).